The primary structure comprises 255 residues: tRNA (guanine-N(7)-)-methyltransferase (255 aa).

Residues 1-29 (MMHDDPNEAGLPPDDAALPDEAADGADEV) are disordered. The span at 17–27 (ALPDEAADGAD) shows a compositional bias: acidic residues. Glu-86, Glu-111, Asp-138, and Asp-161 together coordinate S-adenosyl-L-methionine. The active site involves Asp-161. Substrate-binding positions include Lys-165, Asp-197, and 232-235 (TKFE).

Belongs to the class I-like SAM-binding methyltransferase superfamily. TrmB family.

The enzyme catalyses guanosine(46) in tRNA + S-adenosyl-L-methionine = N(7)-methylguanosine(46) in tRNA + S-adenosyl-L-homocysteine. The protein operates within tRNA modification; N(7)-methylguanine-tRNA biosynthesis. Functionally, catalyzes the formation of N(7)-methylguanine at position 46 (m7G46) in tRNA. This is tRNA (guanine-N(7)-)-methyltransferase from Burkholderia ambifaria (strain ATCC BAA-244 / DSM 16087 / CCUG 44356 / LMG 19182 / AMMD) (Burkholderia cepacia (strain AMMD)).